Here is a 441-residue protein sequence, read N- to C-terminus: Phosphoribosylamine--glycine ligase (441 aa).

In terms of domain architecture, ATP-grasp spans 112–319 (RNFMKKYGIE…FTEIMSAVVK (208 aa)). 139 to 196 (IEKLGDVAVKPSGLTGGKGVKVMGDQLPDLKAAKDYTSELLEKGPVVIEERFIGEEFT) provides a ligand contact to ATP. The Mg(2+) site is built by Gln-277, Glu-289, and Asn-291. 3 residues coordinate Mn(2+): Gln-277, Glu-289, and Asn-291.

Belongs to the GARS family. The cofactor is Mg(2+). Mn(2+) serves as cofactor.

It carries out the reaction 5-phospho-beta-D-ribosylamine + glycine + ATP = N(1)-(5-phospho-beta-D-ribosyl)glycinamide + ADP + phosphate + H(+). It participates in purine metabolism; IMP biosynthesis via de novo pathway; N(1)-(5-phospho-D-ribosyl)glycinamide from 5-phospho-alpha-D-ribose 1-diphosphate: step 2/2. This Methanosarcina acetivorans (strain ATCC 35395 / DSM 2834 / JCM 12185 / C2A) protein is Phosphoribosylamine--glycine ligase.